The chain runs to 499 residues: Tektin-like protein 1 (499 aa).

S14 carries the post-translational modification Phosphoserine. A coiled-coil region spans residues 201–225 (WEKKELKSMKRKMEKDMEISEDLLK). Residues 265 to 286 (VDITRPPTPRTQGLKTPPPDPI) are disordered. A coiled-coil region spans residues 308–328 (KDILTEMAKNEVDIQNQQQEI). The residue at position 372 (Y372) is a Phosphotyrosine.

Microtubule inner protein component of sperm flagellar doublet microtubules.

It is found in the cytoplasm. It localises to the cytoskeleton. The protein resides in the flagellum axoneme. Its function is as follows. Microtubule inner protein (MIP) part of the dynein-decorated doublet microtubules (DMTs) in sperm flagellar axoneme, which is required for motile flagellum beating. Forms an extensive interaction network cross-linking the lumen of axonemal doublet microtubules. This Mus musculus (Mouse) protein is Tektin-like protein 1.